A 155-amino-acid polypeptide reads, in one-letter code: SsrA-binding protein (155 aa).

A compositionally biased stretch (basic and acidic residues) spans 135 to 147; it reads TIKRRDQERDIKK. Residues 135–155 are disordered; the sequence is TIKRRDQERDIKKQMKHYNAR.

Belongs to the SmpB family.

Its subcellular location is the cytoplasm. Required for rescue of stalled ribosomes mediated by trans-translation. Binds to transfer-messenger RNA (tmRNA), required for stable association of tmRNA with ribosomes. tmRNA and SmpB together mimic tRNA shape, replacing the anticodon stem-loop with SmpB. tmRNA is encoded by the ssrA gene; the 2 termini fold to resemble tRNA(Ala) and it encodes a 'tag peptide', a short internal open reading frame. During trans-translation Ala-aminoacylated tmRNA acts like a tRNA, entering the A-site of stalled ribosomes, displacing the stalled mRNA. The ribosome then switches to translate the ORF on the tmRNA; the nascent peptide is terminated with the 'tag peptide' encoded by the tmRNA and targeted for degradation. The ribosome is freed to recommence translation, which seems to be the essential function of trans-translation. The sequence is that of SsrA-binding protein from Streptococcus pyogenes serotype M6 (strain ATCC BAA-946 / MGAS10394).